A 435-amino-acid chain; its full sequence is Eukaryotic translation initiation factor 3 subunit E (435 aa).

The region spanning 219–392 is the PCI domain; sequence FFNHPKGRDL…GHVVMGTQPL (174 aa).

It belongs to the eIF-3 subunit E family. As to quaternary structure, component of the eukaryotic translation initiation factor 3 (eIF-3) complex. The eIF-3 complex interacts with pix. Interacts with mxt. In terms of tissue distribution, expression levels in females and males are relatively similar 10 days after oviposition, however by day 15 expression is higher in gravid females than in males (at protein level).

It is found in the cytoplasm. Its subcellular location is the microsome. It localises to the endoplasmic reticulum. In terms of biological role, component of the eukaryotic translation initiation factor 3 (eIF-3) complex, which is involved in protein synthesis of a specialized repertoire of mRNAs and, together with other initiation factors, stimulates binding of mRNA and methionyl-tRNAi to the 40S ribosome. The eIF-3 complex specifically targets and initiates translation of a subset of mRNAs involved in cell proliferation. In addition to its role in the eIF-3 complex, also functions in protein ubiquitination and degradation. During mitosis required for regulating mitotic microtubule growth and kinetochore formation, and consequently is required for satisfying the spindle assembly checkpoint (SAC) during metaphase to prevent delays in mitotic progression. This is likely by promoting the ubiquitination and degradation of Klp67A, a kinesin-like protein that suppresses microtubule polymerization at plus ends. Acts in the COP9 signalosome (CSN) mediated regulation of cullin neddylation by promoting Cul1 and Cul3 neddylation and negatively regulating the CSN complex subunit CSN5. In Drosophila melanogaster (Fruit fly), this protein is Eukaryotic translation initiation factor 3 subunit E.